Here is a 218-residue protein sequence, read N- to C-terminus: Thiopurine S-methyltransferase (218 aa).

S-adenosyl-L-methionine contacts are provided by Trp10, Leu45, Glu66, and Arg123.

The protein belongs to the class I-like SAM-binding methyltransferase superfamily. TPMT family.

The protein localises to the cytoplasm. The enzyme catalyses S-adenosyl-L-methionine + a thiopurine = S-adenosyl-L-homocysteine + a thiopurine S-methylether.. Involved in the biological cycling of tellurium and selenium. Tellurium resistance (Ter) mechanism. This is Thiopurine S-methyltransferase from Pseudomonas syringae pv. pisi.